A 216-amino-acid polypeptide reads, in one-letter code: Adenylate kinase (216 aa).

10 to 15 (GAGKGT) is a binding site for ATP. An NMP region spans residues 30 to 59 (STGDMLRAAVKAGTELGIKAKSIMDAGGLV). AMP-binding positions include Thr-31, Arg-36, 57–59 (GLV), 85–88 (GFPR), and Gln-92. Positions 122-159 (GRRVHEASGRVYHIVYNPPKIAGKDDITGEELVQRKDD) are LID. ATP contacts are provided by residues Arg-123 and 132–133 (VY). Residues Arg-156 and Arg-167 each coordinate AMP. Residue Gly-202 coordinates ATP.

It belongs to the adenylate kinase family. As to quaternary structure, monomer.

The protein resides in the cytoplasm. It carries out the reaction AMP + ATP = 2 ADP. Its pathway is purine metabolism; AMP biosynthesis via salvage pathway; AMP from ADP: step 1/1. Functionally, catalyzes the reversible transfer of the terminal phosphate group between ATP and AMP. Plays an important role in cellular energy homeostasis and in adenine nucleotide metabolism. The sequence is that of Adenylate kinase from Pseudomonas fluorescens (strain Pf0-1).